The sequence spans 229 residues: DNA mismatch repair protein MutH (229 aa).

It belongs to the MutH family.

It localises to the cytoplasm. Functionally, sequence-specific endonuclease that cleaves unmethylated GATC sequences. It is involved in DNA mismatch repair. The protein is DNA mismatch repair protein MutH of Shigella flexneri.